The primary structure comprises 224 residues: Peroxiredoxin-6 (224 aa).

A Thioredoxin domain is found at 5–169; sequence LLLGDVAPNF…ILRVVISLQL (165 aa). Residues 31-40 are required and sufficient for targeting to lysosomes and lamellar bodies; the sequence is DSWGILFSHP. Thr44 carries the phosphothreonine modification. Residue Cys47 is the Cysteine sulfenic acid (-SOH) intermediate; for peroxidase activity of the active site. Residue Lys63 is modified to N6-acetyllysine. Tyr89 bears the Phosphotyrosine mark. Catalysis depends on Asp140, which acts as the For phospholipase activity. Thr177 is modified (phosphothreonine; by MAPK). At Lys209 the chain carries N6-acetyllysine; alternate. Lys209 bears the N6-succinyllysine; alternate mark.

It belongs to the peroxiredoxin family. Prx6 subfamily. Homodimer. Interacts with GSTP1; mediates PRDX6 glutathionylation and regeneration. Interacts with APEX1. Interacts with STH. May interact with FAM168B. May interact with HTR2A. Irreversibly inactivated by overoxidation of Cys-47 to sulfinic acid (Cys-SO(2)H) and sulfonic acid (Cys-SO(3)H) forms upon oxidative stress. Post-translationally, phosphorylation at Thr-177 by MAP kinases increases the phospholipase activity of the enzyme. The phosphorylated form exhibits a greater lysophosphatidylcholine acyltransferase activity compared to the non-phosphorylated form.

The protein localises to the cytoplasm. The protein resides in the lysosome. It catalyses the reaction a hydroperoxide + 2 glutathione = an alcohol + glutathione disulfide + H2O. The catalysed reaction is a 1,2-diacyl-sn-glycero-3-phosphocholine + H2O = a 1-acyl-sn-glycero-3-phosphocholine + a fatty acid + H(+). It carries out the reaction a 1-acyl-sn-glycero-3-phosphocholine + an acyl-CoA = a 1,2-diacyl-sn-glycero-3-phosphocholine + CoA. The enzyme catalyses 1-hexadecanoyl-sn-glycero-3-phosphocholine + hexadecanoyl-CoA = 1,2-dihexadecanoyl-sn-glycero-3-phosphocholine + CoA. It catalyses the reaction 1,2-dihexadecanoyl-sn-glycero-3-phosphocholine + H2O = 1-hexadecanoyl-sn-glycero-3-phosphocholine + hexadecanoate + H(+). Its function is as follows. Thiol-specific peroxidase that catalyzes the reduction of hydrogen peroxide and organic hydroperoxides to water and alcohols, respectively. Can reduce H(2)O(2) and short chain organic, fatty acid, and phospholipid hydroperoxides. Also has phospholipase activity, and can therefore either reduce the oxidized sn-2 fatty acyl group of phospholipids (peroxidase activity) or hydrolyze the sn-2 ester bond of phospholipids (phospholipase activity). These activities are dependent on binding to phospholipids at acidic pH and to oxidized phospholipds at cytosolic pH. Plays a role in cell protection against oxidative stress by detoxifying peroxides and in phospholipid homeostasis. Exhibits acyl-CoA-dependent lysophospholipid acyltransferase which mediates the conversion of lysophosphatidylcholine (1-acyl-sn-glycero-3-phosphocholine or LPC) into phosphatidylcholine (1,2-diacyl-sn-glycero-3-phosphocholine or PC). Shows a clear preference for LPC as the lysophospholipid and for palmitoyl CoA as the fatty acyl substrate. This is Peroxiredoxin-6 (PRDX6) from Pongo abelii (Sumatran orangutan).